Here is a 155-residue protein sequence, read N- to C-terminus: NADPH-dependent 7-cyano-7-deazaguanine reductase (155 aa).

Polar residues predominate over residues 1–20; it reads MMPNTDVSSLSMLGQQTETA. Positions 1–26 are disordered; that stretch reads MMPNTDVSSLSMLGQQTETAKSPEEA. Cysteine 53 acts as the Thioimide intermediate in catalysis. Aspartate 60 acts as the Proton donor in catalysis. Residues 75–77 and 94–95 each bind substrate; these read VES and HE.

Belongs to the GTP cyclohydrolase I family. QueF type 1 subfamily.

Its subcellular location is the cytoplasm. The catalysed reaction is 7-aminomethyl-7-carbaguanine + 2 NADP(+) = 7-cyano-7-deazaguanine + 2 NADPH + 3 H(+). The protein operates within tRNA modification; tRNA-queuosine biosynthesis. Catalyzes the NADPH-dependent reduction of 7-cyano-7-deazaguanine (preQ0) to 7-aminomethyl-7-deazaguanine (preQ1). The polypeptide is NADPH-dependent 7-cyano-7-deazaguanine reductase (Rhizobium etli (strain CIAT 652)).